Consider the following 506-residue polypeptide: Glutamate--tRNA ligase (506 aa).

Positions 21–31 match the 'HIGH' region motif; sequence PSPTGTPHVGM. Positions 265–269 match the 'KMSKS' region motif; it reads KLSKR. ATP is bound at residue Lys268.

Belongs to the class-I aminoacyl-tRNA synthetase family. Glutamate--tRNA ligase type 1 subfamily. As to quaternary structure, monomer.

Its subcellular location is the cytoplasm. The catalysed reaction is tRNA(Glu) + L-glutamate + ATP = L-glutamyl-tRNA(Glu) + AMP + diphosphate. Its function is as follows. Catalyzes the attachment of glutamate to tRNA(Glu) in a two-step reaction: glutamate is first activated by ATP to form Glu-AMP and then transferred to the acceptor end of tRNA(Glu). This Bifidobacterium longum (strain DJO10A) protein is Glutamate--tRNA ligase.